A 384-amino-acid polypeptide reads, in one-letter code: 23S rRNA (uracil(747)-C(5))-methyltransferase RlmC (384 aa).

[4Fe-4S] cluster contacts are provided by C7, C15, C18, and C94. S-adenosyl-L-methionine contacts are provided by Q219, F248, E269, and N316. The active-site Nucleophile is the C343.

Belongs to the class I-like SAM-binding methyltransferase superfamily. RNA M5U methyltransferase family. RlmC subfamily.

The catalysed reaction is uridine(747) in 23S rRNA + S-adenosyl-L-methionine = 5-methyluridine(747) in 23S rRNA + S-adenosyl-L-homocysteine + H(+). Catalyzes the formation of 5-methyl-uridine at position 747 (m5U747) in 23S rRNA. The protein is 23S rRNA (uracil(747)-C(5))-methyltransferase RlmC of Shewanella sp. (strain ANA-3).